A 681-amino-acid polypeptide reads, in one-letter code: CAI-1 autoinducer sensor kinase/phosphatase CqsS (681 aa).

The next 4 helical transmembrane spans lie at 17 to 37 (LVGW…EFMF), 73 to 93 (AYYQ…MLLM), 112 to 132 (ILLV…IGLA), and 148 to 168 (MDWT…LFYF). One can recognise a Histidine kinase domain in the interval 187–413 (GIAHEMRNPL…QFTMTFPTIG (227 aa)). His-190 is subject to Phosphohistidine; by autocatalysis. The 118-residue stretch at 564–681 (TIMVVDDNES…RLFDKIANWI (118 aa)) folds into the Response regulatory domain. At Asp-613 the chain carries 4-aspartylphosphate.

It is found in the cell membrane. The enzyme catalyses ATP + protein L-histidine = ADP + protein N-phospho-L-histidine.. Senses the quorum-sensing autoinducer CAI-1 ((S)-3-hydroxytridecan-4-one) which probably functions as an intragenus signal. The sensory signal is then relayed to LuxU and LuxO. This Vibrio campbellii (strain ATCC BAA-1116) protein is CAI-1 autoinducer sensor kinase/phosphatase CqsS (cqsS).